A 50-amino-acid polypeptide reads, in one-letter code: MRETVHLGCEKCTRRNYHTTKNKKTTTEKLALKKYCKWCKEHTVHKEMKL.

It belongs to the bacterial ribosomal protein bL33 family.

The sequence is that of Large ribosomal subunit protein bL33 from Sulfurovum sp. (strain NBC37-1).